A 506-amino-acid polypeptide reads, in one-letter code: MSQQTAITPTRAQDFPEWYQQVIKAADMAENSEVRGCMVIKPWGYAIWELIQKDLDQRFKDTGHTNAYFPLLIPISYLEKEAEHAEGFATECAVVTHHRLEAQKDEATGKTRMIPTGELTEPFVIRPTSETVIGAAFARWTSSYRDLPLKVNQWCNVMRWEMRPRIFLRTAEFLWQEGHTAHETREEAIEETLTMHKVYEEFQRDVLAIPTIPGEKTEAERFPGAEQTYTVEAMVQDRKAIQAGTSHFLGQNFSKSQNICFAGRDNTQQFAWTSSWGVSTRMIGALIMMHSDDDGLVCPPRVAPQQIVIIPVTPKEESRQAVLDHCEELARTLRAKTFHGQPLRVLVDRRDLGGGAKKWEWVKKGVPVRLEIGPRDLEKGSVCLQRRDRPANEKSFVPETELIDTAADILQSIQDTLLQRAIAFRDSHIRPASTLRELEENFSGEGDADWLQVPWDGSPEEEEELAKRLRISIRCIPLGELGRGEPAPCILTGRMTKRRVLWARSY.

This sequence belongs to the class-II aminoacyl-tRNA synthetase family. ProS type 3 subfamily. In terms of assembly, homodimer.

The protein resides in the cytoplasm. The catalysed reaction is tRNA(Pro) + L-proline + ATP = L-prolyl-tRNA(Pro) + AMP + diphosphate. Functionally, catalyzes the attachment of proline to tRNA(Pro) in a two-step reaction: proline is first activated by ATP to form Pro-AMP and then transferred to the acceptor end of tRNA(Pro). The polypeptide is Proline--tRNA ligase (Akkermansia muciniphila (strain ATCC BAA-835 / DSM 22959 / JCM 33894 / BCRC 81048 / CCUG 64013 / CIP 107961 / Muc)).